The chain runs to 87 residues: Small ribosomal subunit protein uS15c (87 aa).

The segment at M1–P20 is disordered.

Belongs to the universal ribosomal protein uS15 family. As to quaternary structure, part of the 30S ribosomal subunit.

Its subcellular location is the plastid. The protein localises to the chloroplast. The protein is Small ribosomal subunit protein uS15c (rps15) of Zygnema circumcarinatum (Green alga).